The sequence spans 459 residues: ATP synthase subunit beta (459 aa).

Residue 147 to 154 coordinates ATP; it reads GGAGVGKT.

This sequence belongs to the ATPase alpha/beta chains family. F-type ATPases have 2 components, CF(1) - the catalytic core - and CF(0) - the membrane proton channel. CF(1) has five subunits: alpha(3), beta(3), gamma(1), delta(1), epsilon(1). CF(0) has three main subunits: a(1), b(2) and c(9-12). The alpha and beta chains form an alternating ring which encloses part of the gamma chain. CF(1) is attached to CF(0) by a central stalk formed by the gamma and epsilon chains, while a peripheral stalk is formed by the delta and b chains.

The protein localises to the cell inner membrane. It carries out the reaction ATP + H2O + 4 H(+)(in) = ADP + phosphate + 5 H(+)(out). Its function is as follows. Produces ATP from ADP in the presence of a proton gradient across the membrane. The catalytic sites are hosted primarily by the beta subunits. This chain is ATP synthase subunit beta, found in Hydrogenovibrio crunogenus (strain DSM 25203 / XCL-2) (Thiomicrospira crunogena).